The primary structure comprises 452 residues: Golgi reassembly-stacking protein 2 (452 aa).

A lipid anchor (N-myristoyl glycine) is attached at Gly2. PDZ GRASP-type domains are found at residues 15–105 (EGYH…FCSF) and 111–199 (NVWH…YGYL). The GRASP stretch occupies residues 15–215 (EGYHVLRVQE…PFEEGKKISL (201 aa)). Dimethylated arginine is present on residues Arg30 and Arg47. The tract at residues 194 to 199 (IGYGYL) is important for membrane binding. Ser214 is modified (phosphoserine). Phosphothreonine occurs at positions 222 and 225. The span at 372–424 (PESSSAASSGELLSSLPPTSNAPSDPATTTAKADAASSLTVDVTPPTAKAPTT) shows a compositional bias: low complexity. Residues 372 to 452 (PESSSAASSG…AVDANASESP (81 aa)) are disordered. Ser409 bears the Phosphoserine mark. Residues Thr415 and Thr433 each carry the phosphothreonine modification. Phosphoserine occurs at positions 436, 441, 449, and 451.

The protein belongs to the GORASP family. Homodimer. Homooligomer. ER stress induces phosphorylation-dependent monomerization. Interacts with BLZF1/Golgin 45. Identified in a complex with RAB2 and GORASP2. Interacts with JAM2 and JAM3. Interacts with members of the p24 cargo receptors. Interacts with CNIH1 and the cytoplasmic domain of transmembrane TGFA, prior its transit in the trans-Golgi. Interacts with KCTD5. Interacts with TMED2 and TMED3. Interacts with SEC16A in response to ER stress. Interacts (via PDZ GRASP-type 1 domain) with core-glycosylated CFTR in response to ER stress. Post-translationally, myristoylated. Myristoylation is essential for the Golgi targeting. Palmitoylated. In terms of processing, phosphorylated in mitotic cells. ER stress-induced phosphorylation at Ser-441 induces monomerization and subsequent relocalization from Golgi to ER which is essential for mediating unconventional (ER/Golgi-independent) trafficking of CFTR to the cell membrane.

The protein localises to the golgi apparatus membrane. Its subcellular location is the endoplasmic reticulum membrane. The protein resides in the golgi apparatus. Functionally, key structural protein of the Golgi apparatus. The membrane cisternae of the Golgi apparatus adhere to each other to form stacks, which are aligned side by side to form the Golgi ribbon. Acting in concert with GORASP1/GRASP65, is required for the formation and maintenance of the Golgi ribbon, and may be dispensable for the formation of stacks. However, other studies suggest that GORASP2 plays a role in the assembly and membrane stacking of the Golgi cisternae, and in the process by which Golgi stacks reform after breakdown during mitosis and meiosis. May regulate the intracellular transport and presentation of a defined set of transmembrane proteins, such as transmembrane TGFA. Required for normal acrosome formation during spermiogenesis and normal male fertility, probably by promoting colocalization of JAM2 and JAM3 at contact sites between germ cells and Sertoli cells. Mediates ER stress-induced unconventional (ER/Golgi-independent) trafficking of core-glycosylated CFTR to cell membrane. The polypeptide is Golgi reassembly-stacking protein 2 (GORASP2) (Homo sapiens (Human)).